The chain runs to 1021 residues: Immunoglobulin superfamily member 2 (1021 aa).

A signal peptide spans methionine 1–glycine 20. The Extracellular portion of the chain corresponds to glutamine 21–proline 954. Ig-like C2-type domains are found at residues arginine 22 to asparagine 139, proline 144 to isoleucine 265, proline 279 to serine 389, proline 408 to serine 525, leucine 541 to tyrosine 651, proline 656 to leucine 794, and proline 808 to asparagine 925. Cystine bridges form between cysteine 43-cysteine 121 and cysteine 168-cysteine 249. Asparagine 44 carries an N-linked (GlcNAc...) asparagine glycan. The short motif at glutamate 253–isoleucine 255 is the EWI motif element. Intrachain disulfides connect cysteine 304/cysteine 377, cysteine 434/cysteine 511, cysteine 562/cysteine 640, cysteine 697/cysteine 778, and cysteine 834/cysteine 909. A glycan (N-linked (GlcNAc...) asparagine) is linked at asparagine 322. The helical transmembrane segment at leucine 955 to leucine 975 threads the bilayer. The Cytoplasmic portion of the chain corresponds to cysteine 976–asparagine 1021.

Post-translationally, N-glycosylated. As to expression, expressed in lung, thymus and small intestine. Detected in cutaneous dendritic cells, activated T-cells, monocytes and granulocytes as well as with epithelial cells with dendritic morphology. Expressed in some leukemic cells, the CD4(+) CD56(+) blastic tumor cells, as well as in Langerhans cells from LCH (Langerhans cell histiocytosis) patients.

Its subcellular location is the membrane. Plays a role as inhibitor of T-cells proliferation induced by CD3. Inhibits expression of IL2RA on activated T-cells and secretion of IL2. Inhibits tyrosine kinases that are required for IL2 production and cellular proliferation. Inhibits phospholipase C-gamma-1/PLCG1 phosphorylation and subsequent CD3-induced changes in intracellular free calcium. Prevents nuclear translocation of nuclear factor of activated T-cell to the nucleus. Plays a role in the inhibition of T-cell proliferation via IL10 secretion by cutaneous dendritic cells. May be a marker of CD4(+) CD56(+) leukemic tumor cells. This is Immunoglobulin superfamily member 2 (CD101) from Homo sapiens (Human).